A 1371-amino-acid polypeptide reads, in one-letter code: Perilipin-4 (1371 aa).

A compositionally biased stretch (basic and acidic residues) spans 1–13 (MSAPDEGRRDPPK). The disordered stretch occupies residues 1 to 22 (MSAPDEGRRDPPKPKGKTLGSF). Residues Ser-25 and Ser-31 each carry the phosphoserine modification. Residues 37-86 (ANAHSSARARPAADPTGAPAAEAAQPQAQVAAHPEQTAPWTEKELQPSEK) are disordered. Residues 44–72 (RARPAADPTGAPAAEAAQPQAQVAAHPEQ) show a composition bias toward low complexity. A run of 27 repeats spans residues 109 to 141 (GVAS…VVSS), 142 to 174 (GVTG…TVST), 175 to 207 (GLTG…TVTT), 208 to 240 (GVMG…AVST), 241 to 273 (GLTG…TVCS), 274 to 306 (GVTG…TVCS), 307 to 339 (GVTG…TVCS), 340 to 372 (GVTG…TVCS), 373 to 405 (GVTG…TMST), 406 to 438 (GLTG…TVCS), 439 to 471 (GVTG…TVCS), 472 to 504 (GVTG…AVST), 505 to 537 (GLTG…TVCS), 538 to 570 (GVTS…TMST), 571 to 603 (GLTG…TVTT), 604 to 636 (GLVG…TIYS), 637 to 669 (GVTS…TFGS), 670 to 702 (GVTS…TVTT), 703 to 735 (GLMG…TVCS), 736 to 768 (GVTG…AVST), 769 to 801 (GLTG…AVCS), 802 to 834 (GVTG…TVCS), 835 to 867 (GVTG…TLGS), 868 to 900 (GVTG…AVST), 901 to 933 (GLTG…TVCS), 934 to 966 (GVTG…AVTT), and 967 to 999 (GVTG…TVFS). The segment at 109–999 (GVASVVDVAK…LMGTKDTVFS (891 aa)) is 27 X 33 AA approximate tandem repeat. The segment covering 1060-1083 (PATSWGGLTSSRTTDNGGEQTALS) has biased composition (polar residues). 2 disordered regions span residues 1060-1093 (PATS…SGIS) and 1240-1260 (QAPE…EDAA).

The protein belongs to the perilipin family.

The protein localises to the cell membrane. Its subcellular location is the cytoplasm. It localises to the lipid droplet. Functionally, may play a role in triacylglycerol packaging into adipocytes. May function as a coat protein involved in the biogenesis of lipid droplets. The chain is Perilipin-4 from Homo sapiens (Human).